We begin with the raw amino-acid sequence, 621 residues long: UvrABC system protein C (621 aa).

Positions 11 to 90 (TTPGVYLYKD…IKKHRPRYNI (80 aa)) constitute a GIY-YIG domain. Residues 200 to 235 (KELVELLQKDMLYASEALEFEKAATLRDQIQAIKHT) enclose the UVR domain.

The protein belongs to the UvrC family. Interacts with UvrB in an incision complex.

Its subcellular location is the cytoplasm. Functionally, the UvrABC repair system catalyzes the recognition and processing of DNA lesions. UvrC both incises the 5' and 3' sides of the lesion. The N-terminal half is responsible for the 3' incision and the C-terminal half is responsible for the 5' incision. In Lawsonia intracellularis (strain PHE/MN1-00), this protein is UvrABC system protein C.